The chain runs to 616 residues: Sulfite reductase [NADPH] flavoprotein alpha-component (616 aa).

The 139-residue stretch at 80–218 (LTIIFASQTG…SAAQWRKQAL (139 aa)) folds into the Flavodoxin-like domain. Residues 86-91 (SQTGNA), 133-136 (STNG), and 169-178 (LGDSSYEFFC) contribute to the FMN site. Residues 251 to 465 (QKPYAATLLT…VENNNNFKLP (215 aa)) form the FAD-binding FR-type domain. FAD is bound by residues threonine 339, glycine 373, 403–406 (RLYS), 421–423 (TVG), tyrosine 427, and 436–439 (GGAS). Residues 536–537 (SR), 542–546 (KVYVQ), and aspartate 578 each bind NADP(+). Tyrosine 616 serves as a coordination point for FAD.

Belongs to the NADPH-dependent sulphite reductase flavoprotein subunit CysJ family. The protein in the N-terminal section; belongs to the flavodoxin family. It in the C-terminal section; belongs to the flavoprotein pyridine nucleotide cytochrome reductase family. In terms of assembly, alpha(8)-beta(8). The alpha component is a flavoprotein, the beta component is a hemoprotein. Requires FAD as cofactor. It depends on FMN as a cofactor.

It carries out the reaction hydrogen sulfide + 3 NADP(+) + 3 H2O = sulfite + 3 NADPH + 4 H(+). It functions in the pathway sulfur metabolism; hydrogen sulfide biosynthesis; hydrogen sulfide from sulfite (NADPH route): step 1/1. Component of the sulfite reductase complex that catalyzes the 6-electron reduction of sulfite to sulfide. This is one of several activities required for the biosynthesis of L-cysteine from sulfate. The flavoprotein component catalyzes the electron flow from NADPH -&gt; FAD -&gt; FMN to the hemoprotein component. In Vibrio vulnificus (strain CMCP6), this protein is Sulfite reductase [NADPH] flavoprotein alpha-component.